The following is a 150-amino-acid chain: MRPVIIHTDGACSGNPGPGGWGAILKFGDTEKELKGGEAHTTNNRMELLAAISALEALTRPCTVDLYTDSQYVKNGIGSWIHNWKRNGWKTADKKPVKNVDLWQRLDAALKSHEVRWHWVKGHAGHDENERADQLARDGLTKHRLKSRIG.

The region spanning 1–141 (MRPVIIHTDG…ADQLARDGLT (141 aa)) is the RNase H type-1 domain. Positions 9, 47, 69, and 133 each coordinate Mg(2+).

Belongs to the RNase H family. Monomer. The cofactor is Mg(2+).

It is found in the cytoplasm. The catalysed reaction is Endonucleolytic cleavage to 5'-phosphomonoester.. In terms of biological role, endonuclease that specifically degrades the RNA of RNA-DNA hybrids. The chain is Ribonuclease H from Rhodopseudomonas palustris (strain BisB5).